The sequence spans 161 residues: uncharacterized protein (161 aa).

Residues 1 to 23 (MKKFAFLTALFAACYLPNAYAHA) constitute a signal peptide (or 21). Residues 129 to 149 (IYLHDILGGIGYIVGIAGLIA) form a helical membrane-spanning segment.

It is found in the membrane. This is an uncharacterized protein from Haemophilus influenzae (strain ATCC 51907 / DSM 11121 / KW20 / Rd).